The primary structure comprises 713 residues: Segment polarity protein dishevelled homolog DVL-3 (713 aa).

The 82-residue stretch at 1-82 (MGETKVIYHL…RVVCWLVSAD (82 aa)) folds into the DIX domain. Polar residues-rich tracts occupy residues 87 to 98 (DAGSVCADNQSD) and 118 to 127 (HPNTRGSQEN). The interval 87–235 (DAGSVCADNQ…PRIERSSSFS (149 aa)) is disordered. A compositionally biased stretch (basic and acidic residues) spans 140–155 (AHRERPRRKETPEHAT). Over residues 173-189 (ESSSTLMSSELDSTSFF) the composition is skewed to low complexity. Residues 199–210 (RFSNSTEQSSAS) are compositionally biased toward polar residues. The segment covering 212–225 (LMRRHKRRRRKPKA) has biased composition (basic residues). The 86-residue stretch at 248-333 (TVTLNMEKYN…KPGPITLTVA (86 aa)) folds into the PDZ domain. The DEP domain maps to 421 to 495 (PESGLEVRDR…SEQCYYIFGD (75 aa)). Residues 508–518 (HDGSSGTSDQD) are compositionally biased toward polar residues. 2 disordered regions span residues 508 to 527 (HDGS…PHPG) and 545 to 652 (YSPH…GPPG). Low complexity predominate over residues 564 to 579 (GSQHSEGSRSSGSNRS). Composition is skewed to basic and acidic residues over residues 580 to 593 (STEK…KGGD) and 602 to 618 (ESDH…RAAS). Basic residues predominate over residues 629–646 (HRSHHSIAHSIRSHHTHH).

The protein belongs to the DSH family.

It is found in the cytoplasm. Functionally, involved in the signal transduction pathway mediated by multiple Wnt genes. Required during ciliogenesis for the docking of basal bodies to the apical plasma membrane. The chain is Segment polarity protein dishevelled homolog DVL-3 from Xenopus tropicalis (Western clawed frog).